The sequence spans 589 residues: 2-succinyl-5-enolpyruvyl-6-hydroxy-3-cyclohexene-1-carboxylate synthase (589 aa).

Belongs to the TPP enzyme family. MenD subfamily. Homodimer. It depends on Mg(2+) as a cofactor. Mn(2+) serves as cofactor. The cofactor is thiamine diphosphate.

It carries out the reaction isochorismate + 2-oxoglutarate + H(+) = 5-enolpyruvoyl-6-hydroxy-2-succinyl-cyclohex-3-ene-1-carboxylate + CO2. Its pathway is quinol/quinone metabolism; 1,4-dihydroxy-2-naphthoate biosynthesis; 1,4-dihydroxy-2-naphthoate from chorismate: step 2/7. It participates in quinol/quinone metabolism; menaquinone biosynthesis. Functionally, catalyzes the thiamine diphosphate-dependent decarboxylation of 2-oxoglutarate and the subsequent addition of the resulting succinic semialdehyde-thiamine pyrophosphate anion to isochorismate to yield 2-succinyl-5-enolpyruvyl-6-hydroxy-3-cyclohexene-1-carboxylate (SEPHCHC). The polypeptide is 2-succinyl-5-enolpyruvyl-6-hydroxy-3-cyclohexene-1-carboxylate synthase (Myxococcus xanthus (strain DK1622)).